The sequence spans 499 residues: Guanosine-5'-triphosphate,3'-diphosphate pyrophosphatase (499 aa).

The protein belongs to the GppA/Ppx family. GppA subfamily.

It carries out the reaction guanosine 3'-diphosphate 5'-triphosphate + H2O = guanosine 3',5'-bis(diphosphate) + phosphate + H(+). It functions in the pathway purine metabolism; ppGpp biosynthesis; ppGpp from GTP: step 2/2. Its function is as follows. Catalyzes the conversion of pppGpp to ppGpp. Guanosine pentaphosphate (pppGpp) is a cytoplasmic signaling molecule which together with ppGpp controls the 'stringent response', an adaptive process that allows bacteria to respond to amino acid starvation, resulting in the coordinated regulation of numerous cellular activities. This chain is Guanosine-5'-triphosphate,3'-diphosphate pyrophosphatase, found in Klebsiella pneumoniae (strain 342).